A 443-amino-acid polypeptide reads, in one-letter code: Xaa-Pro dipeptidase (443 aa).

Positions 246, 257, 339, 384, and 423 each coordinate Mn(2+).

The protein belongs to the peptidase M24B family. Bacterial-type prolidase subfamily. The cofactor is Mn(2+).

The enzyme catalyses Xaa-L-Pro dipeptide + H2O = an L-alpha-amino acid + L-proline. Functionally, splits dipeptides with a prolyl residue in the C-terminal position. In Edwardsiella ictaluri (strain 93-146), this protein is Xaa-Pro dipeptidase.